A 188-amino-acid chain; its full sequence is Elongation factor P (188 aa).

Lysine 34 is subject to N6-(3,6-diaminohexanoyl)-5-hydroxylysine.

Belongs to the elongation factor P family. May be beta-lysylated on the epsilon-amino group of Lys-34 by the combined action of EpmA and EpmB, and then hydroxylated on the C5 position of the same residue by EpmC (if this protein is present). Lysylation is critical for the stimulatory effect of EF-P on peptide-bond formation. The lysylation moiety may extend toward the peptidyltransferase center and stabilize the terminal 3-CCA end of the tRNA. Hydroxylation of the C5 position on Lys-34 may allow additional potential stabilizing hydrogen-bond interactions with the P-tRNA.

It localises to the cytoplasm. The protein operates within protein biosynthesis; polypeptide chain elongation. Functionally, involved in peptide bond synthesis. Alleviates ribosome stalling that occurs when 3 or more consecutive Pro residues or the sequence PPG is present in a protein, possibly by augmenting the peptidyl transferase activity of the ribosome. Modification of Lys-34 is required for alleviation. This is Elongation factor P from Haemophilus influenzae (strain PittGG).